The chain runs to 129 residues: MAKKTVAAKKRNVKVDANGQLHVHSSFNNIIVSLANSEGQIISWSSAGKMGFRGSKKNTPYAAQMAAQDCAKVAFDLGLRKVKAYVKGPGNGRESAIRTVHGAGIEVTEIIDVTPLPHNGCRPPKRRRV.

Belongs to the universal ribosomal protein uS11 family. Part of the 30S ribosomal subunit. Interacts with proteins S7 and S18. Binds to IF-3.

In terms of biological role, located on the platform of the 30S subunit, it bridges several disparate RNA helices of the 16S rRNA. Forms part of the Shine-Dalgarno cleft in the 70S ribosome. The chain is Small ribosomal subunit protein uS11 from Phocaeicola vulgatus (strain ATCC 8482 / DSM 1447 / JCM 5826 / CCUG 4940 / NBRC 14291 / NCTC 11154) (Bacteroides vulgatus).